A 658-amino-acid chain; its full sequence is MRRAPERLSACHAMARKPQTPPDRETERFHEERAATTLRGADRPDIELGAGVIRETVQTLKPKPGVYRMLDARGDVLYVGKARALKNRVANYTQVERLPNRLRRMVSQTRSMTIVTTNSEAEALLLEAQLIKRFRPPYNVLLRDDKSFPFILLRGDHAFPRISKHRGARKAKGNYYGPFASAGSVNTTINALQKLFLLRSCNDGFMARRDRPCLLYQIRRCSAPCVGRISEADYGELVRQAKDFLGGKSGAVQREIEAQMHKAAEDLDFERAAMLRDRLRAATFIQGSQAINAEGVGNADVFAMATKGGQVAVQAFFIRGGQNWGHRAFFPSHTEGLSEEEVMTSFLAQFYEEVPPARLILVDRALPEADLLAEALCEAAGGKVEISVPQRGDRRRLMEQAQRNAVEALDRRMAESGTKAKVMRELAEFLELPEVPQRIEIYDNSHIQGTNALGAMVVAGPEGFVKGQYRKWNIKLAQTNDDFAMMREVMTRRFGRAQEEDPDRESGNWPDLVLIDGGKGQMSAVKEALGELGIEDVPLVAIAKGPHHGREGREVFHFPDGREKMLPVNSPVLFQLQVMRDEVHRFAIGAHRAKRSRAITASPLDEIPGIGPARKRALLLHFGTAGKVRAASLEDLQRAPGVSAAVAQTIYDFYHPSG.

In terms of domain architecture, GIY-YIG spans 62–140; that stretch reads PKPGVYRMLD…IKRFRPPYNV (79 aa). A UVR domain is found at 250 to 285; that stretch reads GAVQREIEAQMHKAAEDLDFERAAMLRDRLRAATFI.

The protein belongs to the UvrC family. In terms of assembly, interacts with UvrB in an incision complex.

The protein resides in the cytoplasm. In terms of biological role, the UvrABC repair system catalyzes the recognition and processing of DNA lesions. UvrC both incises the 5' and 3' sides of the lesion. The N-terminal half is responsible for the 3' incision and the C-terminal half is responsible for the 5' incision. This Novosphingobium aromaticivorans (strain ATCC 700278 / DSM 12444 / CCUG 56034 / CIP 105152 / NBRC 16084 / F199) protein is UvrABC system protein C.